The chain runs to 1200 residues: MSPAAAAADGGERRRPPLGGREGRSRARGYGGPAGAAALGLALLGLALYLVPAAAALAWLAVGASAAWWGLSREPRGPRALSSFVRDARRHPRPALTASPPPAKSPVNGSLCEPRSPLGGPDPAELLLMGSYLGKPGPPEPALRQDPRERPGRRPPARSPPPASAVQRVHHVYPALPTPLLRPSRRPPHRDCGPLSSRFVITPRRRYPIQQAQYSLLGALPTVCWNGGHKKAVLSPRNSRMVCSPVTVRIAPPDSKLFRSSMSEQILDTTLSSPSSNAPDPCAKETVLNALKEKKKRTVAEEDQLHLDGQENKRRRHDSGGSGHSAFEPLVANGVPAAFVPKPGSLKRSLASQSSDDHLNKRSRTSSVSSLASACTGGIPSSSRNAITSSYSSTRGISQLWKRSGPTSSPFSSPASSRSQTPERPAKKTREEEPCQQSSSSPPLVTDKESPGEKVTDTTTGKQQSSWTSPPTPGSSGQRKRKIQLLPSRRGDQLTLPPPPELGYSITAEDLDMERKASLQWFNKVLEDKPDDASASATDGPPSTSPPFTFTLPAVGPAASPASLPAPSSNPLLESLKKMQESPAPSSSEPAEAATVAAPSPPKTPSLLAPLVSPLAGPLASTSSDSKPAATFLGLASASSITPLTDSKSSGVSQAEQSVSTPASTASSPTPKPSMLFGMLSPPASSSSLATPAPACASPMFKPIFPATPKSESDSPLPSSSSAATTASSSTAPPTAASTTPTFKPIFDKMEPFTAMPLSTPFSLKQTTATATTTATSAPLFTGLGTATSTVASGTAASASKPVFGFGVTTAASTASSTMTSTSQSVLFGGAPPVTTSSSAPALASIFQFGKPLAPAASAAGTSFSQPLASSTQTAASNSGFSGFGSTLTTSTSAPATTSQPTLTFSNTVTPTFNIPFSSSAKPALPTYPGANSQPTFGATDGATKPALAPSFGSSFTFGNSVASAPSAAPAPATFGSAAQPAFGGLKAAASTFGAPASTQPAFGSTTSVFSFGSATTSGFGAAATAATTTQTTNSGSSSSLFGSSAPSPFTFGGSAAPAGSGGFGLSATPGTSSTSGTFSFGSGQSGTPGTTTSFGSLSQNTLGAPSQGSPFAFSVGSTPESKPVFGGTSTPTFGQSAPAPGVGTTGSSLSFGASSTPAQGFVGVGPFGSAAPSFSIGAGSKTPGARQRLQARRQHTRKK.

The segment at 1–29 (MSPAAAAADGGERRRPPLGGREGRSRARG) is disordered. Residues 1–56 (MSPAAAAADGGERRRPPLGGREGRSRARGYGGPAGAAALGLALLGLALYLVPAAAA) are cisternal side. Positions 10 to 25 (GGERRRPPLGGREGRS) are enriched in basic and acidic residues. The helical transmembrane segment at 57–77 (LAWLAVGASAAWWGLSREPRG) threads the bilayer. Positions 76–1200 (RGPRALSSFV…QARRQHTRKK (1125 aa)) are pore side. Position 83 is a phosphoserine (S83). Disordered stretches follow at residues 91-167 (HPRP…SAVQ) and 177-196 (PTPL…GPLS). Residues 143 to 152 (LRQDPRERPG) show a composition bias toward basic and acidic residues. Position 244 is a phosphoserine (S244). Disordered stretches follow at residues 294-328 (KKKR…SAFE), 345-509 (SLKR…ITAE), 530-627 (PDDA…SDSK), 640-692 (SITP…LATP), 706-744 (PATP…PTFK), 1075-1151 (TSGT…SSLS), and 1173-1200 (PSFS…TRKK). The segment covering 298–312 (TVAEEDQLHLDGQEN) has biased composition (basic and acidic residues). 7 positions are modified to phosphoserine: S319, S322, S325, S345, S355, S367, and S370. Positions 365-374 (TSSVSSLASA) are enriched in low complexity. Residues 379–397 (IPSSSRNAITSSYSSTRGI) are compositionally biased toward polar residues. Residues 404 to 419 (SGPTSSPFSSPASSRS) show a composition bias toward low complexity. S408, S409, S412, S413, S416, and S417 each carry phosphoserine. 2 stretches are compositionally biased toward basic and acidic residues: residues 424-433 (RPAKKTREEE) and 446-456 (TDKESPGEKVT). 4 stretches are compositionally biased toward low complexity: residues 463-477 (QQSS…GSSG), 546-574 (PPFT…PLLE), 581-598 (ESPA…TVAA), and 605-621 (PSLL…PLAS). Residues 640–657 (SITPLTDSKSSGVSQAEQ) show a composition bias toward polar residues. 4 stretches are compositionally biased toward low complexity: residues 658-669 (SVSTPASTASSP), 681-692 (SPPASSSSLATP), 715-742 (SPLP…TTPT), and 1075-1099 (TSGT…GSLS). Positions 1100 to 1121 (QNTLGAPSQGSPFAFSVGSTPE) are enriched in polar residues. Basic residues predominate over residues 1190-1200 (LQARRQHTRKK).

Belongs to the POM121 family. In terms of processing, proteolytically cleaved by caspase-3 during apoptosis.

Its subcellular location is the nucleus. The protein localises to the nuclear pore complex. It is found in the nucleus membrane. It localises to the endoplasmic reticulum membrane. Its function is as follows. Essential component of the nuclear pore complex (NPC). The repeat-containing domain may be involved in anchoring components of the pore complex to the pore membrane. When overexpressed in cells induces the formation of cytoplasmic annulate lamellae (AL). This is Nuclear envelope pore membrane protein POM 121 (Pom121) from Mus musculus (Mouse).